The sequence spans 123 residues: MARIKVHELRDKSKSDLSTQLKELKAELASLRVAKVTGGAPNKLSKIKVVRKSIAQVLTVSSQKQKSALREAYKNKKLLPLDLRPKKTRAIRRRLTKHQASLKTEREKKKDMYFPIRKYAIKV.

The protein belongs to the universal ribosomal protein uL29 family.

The protein is Large ribosomal subunit protein uL29x (RPL35C) of Arabidopsis thaliana (Mouse-ear cress).